Reading from the N-terminus, the 467-residue chain is DNA polymerase IV (467 aa).

In terms of domain architecture, UmuC spans 5-187 (VLHIDMDAFF…LPVGALWGVG (183 aa)). The Mg(2+) site is built by D9 and D104. Residue E105 is part of the active site. Disordered regions lie at residues 364 to 386 (PDTDYEVGVQSSSSSESTQVEAP) and 428 to 449 (TKGRTKSFSMDDPDLTPADPLD).

It belongs to the DNA polymerase type-Y family. In terms of assembly, monomer. It depends on Mg(2+) as a cofactor.

The protein resides in the cytoplasm. The catalysed reaction is DNA(n) + a 2'-deoxyribonucleoside 5'-triphosphate = DNA(n+1) + diphosphate. Poorly processive, error-prone DNA polymerase involved in untargeted mutagenesis. Copies undamaged DNA at stalled replication forks, which arise in vivo from mismatched or misaligned primer ends. These misaligned primers can be extended by PolIV. Exhibits no 3'-5' exonuclease (proofreading) activity. May be involved in translesional synthesis, in conjunction with the beta clamp from PolIII. The polypeptide is DNA polymerase IV (Corynebacterium glutamicum (strain R)).